Reading from the N-terminus, the 173-residue chain is MDLKQYITQVKDWPKPGVNFKDITTIMDNGAAYKYATDQIVEYAKEKQVDIVVGPEARGFIIGCPVAYAMNIGFAPVRKKGKLPREVISYEYELEYGTNVLTMHKDAIKPGQRVLITDDLLATGGTIEATIKLVESLGGIVAGIAFIIDLKYLNGMEKLKGYDVISLVEYEVE.

The protein belongs to the purine/pyrimidine phosphoribosyltransferase family. Homodimer.

It is found in the cytoplasm. The enzyme catalyses AMP + diphosphate = 5-phospho-alpha-D-ribose 1-diphosphate + adenine. It participates in purine metabolism; AMP biosynthesis via salvage pathway; AMP from adenine: step 1/1. In terms of biological role, catalyzes a salvage reaction resulting in the formation of AMP, that is energically less costly than de novo synthesis. The sequence is that of Adenine phosphoribosyltransferase from Macrococcus caseolyticus (strain JCSC5402) (Macrococcoides caseolyticum).